Consider the following 683-residue polypeptide: Methionine--tRNA ligase (683 aa).

A 'HIGH' region motif is present at residues 23–33 (PYANGSAHIGH). 4 residues coordinate Zn(2+): Cys-154, Cys-157, Cys-166, and Cys-170. Residues 335–339 (KFSKS) carry the 'KMSKS' region motif. Lys-338 contributes to the ATP binding site. The region spanning 583–683 (DFAKMELRVG…KPSEPGTKVR (101 aa)) is the tRNA-binding domain.

Belongs to the class-I aminoacyl-tRNA synthetase family. MetG type 1 subfamily. Homodimer. Requires Zn(2+) as cofactor.

Its subcellular location is the cytoplasm. It catalyses the reaction tRNA(Met) + L-methionine + ATP = L-methionyl-tRNA(Met) + AMP + diphosphate. Is required not only for elongation of protein synthesis but also for the initiation of all mRNA translation through initiator tRNA(fMet) aminoacylation. The sequence is that of Methionine--tRNA ligase from Methanocella arvoryzae (strain DSM 22066 / NBRC 105507 / MRE50).